The primary structure comprises 571 residues: Chitin-inducible gibberellin-responsive protein 1 (571 aa).

Residues 61-77 (TNTPDNQSSTETISAQP) are compositionally biased toward polar residues. Disordered regions lie at residues 61 to 80 (TNTP…PISP) and 151 to 180 (QRSR…YPTA). Positions 192 to 571 (ELREDPQIIV…RKLISASAWH (380 aa)) constitute a GRAS domain. The segment at 199-259 (IIVKQLLTRC…VARHGNSGTN (61 aa)) is leucine repeat I (LRI). The interval 278-343 (MRILYNICPY…GGPPRVRITG (66 aa)) is VHIID. The short motif at 309-313 (IHIID) is the VHIID element. Positions 359–391 (IVGKMLKSMSEEFKIPLEFTPLSVYATQVTKEM) are leucine repeat II (LRII). Positions 400-494 (LSVNFTLQLH…QHCLAKDIVN (95 aa)) are PFYRE. The segment at 497 to 571 (ACEGKDRVER…RKLISASAWH (75 aa)) is SAW.

This sequence belongs to the GRAS family.

The protein resides in the nucleus. Its function is as follows. May play a regulatory role in the early step of oligosaccharide elicitor response, downstream of the membrane-associated high-affinity chitin-binding protein. This Oryza sativa subsp. japonica (Rice) protein is Chitin-inducible gibberellin-responsive protein 1 (CIGR1).